Consider the following 1035-residue polypeptide: Sialidase A (1035 aa).

Residues 1–53 (MSYFRNRDIDIERNSMNRSVQERKCRYSIRKLSVGAVSMIVGAVVFGTSPVLA) form the signal peptide. The disordered stretch occupies residues 57–112 (ASEQPLANETQLSGESSTLTDTEKSQPSSETELSGNKQEQERKDKQEEKIPRDYYA). Residues 61–92 (PLANETQLSGESSTLTDTEKSQPSSETELSGN) show a composition bias toward polar residues. The segment covering 94–112 (QEQERKDKQEEKIPRDYYA) has biased composition (basic and acidic residues). Substrate is bound at residue R347. D372 functions as the Proton acceptor in the catalytic mechanism. BNR repeat units follow at residues 381 to 392 (RRSEDNGKTWGD), 539 to 550 (SYSDDDGKTWSA), and 607 to 618 (IYSDDHGKTWHA). E647 is a catalytic residue. R663 provides a ligand contact to substrate. The BNR 4 repeat unit spans residues 672–683 (ATSKDGGVTWEK). Positions 902-951 (GPLGTSGEEPAPTVEKPEYTGPLGTSGEEPAPTVEKPEYTGPLGTAGEEA) are disordered. Residues 1003-1007 (LPETG) carry the LPXTG sorting signal motif. Pentaglycyl murein peptidoglycan amidated threonine is present on T1006. A propeptide spans 1007-1035 (GNKESDLLASLGLTAFFLGLFTLGKKREQ) (removed by sortase).

This sequence belongs to the glycosyl hydrolase 33 family.

It localises to the secreted. Its subcellular location is the cell wall. It catalyses the reaction Hydrolysis of alpha-(2-&gt;3)-, alpha-(2-&gt;6)-, alpha-(2-&gt;8)- glycosidic linkages of terminal sialic acid residues in oligosaccharides, glycoproteins, glycolipids, colominic acid and synthetic substrates.. The protein is Sialidase A (nanA) of Streptococcus pneumoniae.